Here is a 79-residue protein sequence, read N- to C-terminus: U24-theraphotoxin-Cg1a (79 aa).

The signal sequence occupies residues 1–19; sequence MRVLFIIAVLALISVGCYA. A propeptide spanning residues 20-44 is cleaved from the precursor; it reads SEMKDRSSRNEVLSAIFAIEEPQER. 3 disulfides stabilise this stretch: Cys46-Cys61, Cys53-Cys66, and Cys60-Cys73. Trp78 is modified (tryptophan amide).

This sequence belongs to the neurotoxin 10 (Hwtx-1) family. 35 (Jztx-27) subfamily. As to expression, expressed by the venom gland.

The protein resides in the secreted. In terms of biological role, probable ion channel inhibitor. The protein is U24-theraphotoxin-Cg1a of Chilobrachys guangxiensis (Chinese earth tiger tarantula).